The chain runs to 135 residues: Salivary protein 15 (135 aa).

The N-terminal stretch at 1–21 is a signal peptide; sequence MESFVAMKVVCILFLVGVVAA. N-linked (GlcNAc...) asparagine glycosylation occurs at N22. Residues 48–67 form a required for Borrelia OspC-binding region; the sequence is PNYISNHQKLALKLLKICKD. 2 N-linked (GlcNAc...) asparagine glycosylation sites follow: N92 and N104. Positions 116–135 are CD4-binding; it reads GPNGQTCAEKNKCVGHIPGC.

It belongs to the salp15 family. Monomer. Interacts with host CD4. Interacts with host DC-SIGN (CD209). As to quaternary structure, (Microbial infection) Interacts with Borrelia outer surface protein C (OspC). In terms of processing, glycosylated. Expressed in salivary glands. Detected in host skin, at the site of natural inoculation.

It is found in the secreted. In terms of biological role, salivary tick protein that downregulates host immune system by binding to both dendritic cells, and CD4(+) T cells. Specifically binds to the CD4 coreceptor on T cells. This interaction prevents the activation of the Src kinase, Lck, and its downstream substrate Zap-70, and results in deficient activation of PLCgamma1, the repression of calcium fluxes triggered by T-cell antigen receptor (TCR) ligation, and a subsequent reduction in interleukin-2 production. This salivary protein also binds to DC-SIGN (CD209) on dendritic cells (DC) and activates the Raf-1 kinase/MEK signaling pathway that results in down-regulating expression of pro-inflammatory cytokines. Furthermore, it inhibits T cell proliferation induced by DCs. It also inhibits in vitro keratinocyte inflammation induced by Borrelia burgdorferi or by the major outer surface protein (OspC) of Borrelia. In addition, it downregulates chemokines and monocyte chemoattractant protein 1, as well as several antimicrobial peptides such as defensins, cathelicidin, psoriasin, and RNase 7. Apart from its immunomodulatory activities, it is also associated with protection of Borrelia spirochetes from antibody-mediated killing through its binding to OspC. In vivo, tests on different immune disease animal models show promising therapeutic results, e.g., in inhibiting HIV infection, experimental autoimmune encephalomyelitis, transplantation rejection, and asthma. Functionally, (Microbial infection) Protects Borrelia garinii (strains A87S and VSBP) from host complement-mediated killing. Its function is as follows. (Microbial infection) Partially protects Borrelia burgdorferi (strains VS215 and B31) from host complement-mediated killing. In Ixodes scapularis (Black-legged tick), this protein is Salivary protein 15.